A 121-amino-acid polypeptide reads, in one-letter code: Small ribosomal subunit protein bS16 (121 aa).

Basic and acidic residues predominate over residues 97 to 114; it reads LAKAKTKDEENDNSKVES. The segment at 97 to 121 is disordered; that stretch reads LAKAKTKDEENDNSKVESEGNEAES.

This sequence belongs to the bacterial ribosomal protein bS16 family.

The protein is Small ribosomal subunit protein bS16 of Prochlorococcus marinus (strain AS9601).